We begin with the raw amino-acid sequence, 283 residues long: 1D-myo-inositol 2-acetamido-2-deoxy-alpha-D-glucopyranoside deacetylase (283 aa).

Positions 15, 18, and 150 each coordinate Zn(2+).

The protein belongs to the MshB deacetylase family. Requires Zn(2+) as cofactor.

The catalysed reaction is 1D-myo-inositol 2-acetamido-2-deoxy-alpha-D-glucopyranoside + H2O = 1D-myo-inositol 2-amino-2-deoxy-alpha-D-glucopyranoside + acetate. In terms of biological role, catalyzes the deacetylation of 1D-myo-inositol 2-acetamido-2-deoxy-alpha-D-glucopyranoside (GlcNAc-Ins) in the mycothiol biosynthesis pathway. This is 1D-myo-inositol 2-acetamido-2-deoxy-alpha-D-glucopyranoside deacetylase from Actinosynnema mirum (strain ATCC 29888 / DSM 43827 / JCM 3225 / NBRC 14064 / NCIMB 13271 / NRRL B-12336 / IMRU 3971 / 101).